The following is a 207-amino-acid chain: Thiamine-phosphate synthase (207 aa).

4-amino-2-methyl-5-(diphosphooxymethyl)pyrimidine is bound by residues 36–40 and Asn-68; that span reads QLRMK. Residues Asp-69 and Asp-88 each contribute to the Mg(2+) site. 4-amino-2-methyl-5-(diphosphooxymethyl)pyrimidine is bound at residue Ser-106. Residue 132 to 134 participates in 2-[(2R,5Z)-2-carboxy-4-methylthiazol-5(2H)-ylidene]ethyl phosphate binding; that stretch reads TNT. Lys-135 serves as a coordination point for 4-amino-2-methyl-5-(diphosphooxymethyl)pyrimidine. Residues Gly-162 and 182 to 183 contribute to the 2-[(2R,5Z)-2-carboxy-4-methylthiazol-5(2H)-ylidene]ethyl phosphate site; that span reads VS.

This sequence belongs to the thiamine-phosphate synthase family. Mg(2+) serves as cofactor.

It carries out the reaction 2-[(2R,5Z)-2-carboxy-4-methylthiazol-5(2H)-ylidene]ethyl phosphate + 4-amino-2-methyl-5-(diphosphooxymethyl)pyrimidine + 2 H(+) = thiamine phosphate + CO2 + diphosphate. The enzyme catalyses 2-(2-carboxy-4-methylthiazol-5-yl)ethyl phosphate + 4-amino-2-methyl-5-(diphosphooxymethyl)pyrimidine + 2 H(+) = thiamine phosphate + CO2 + diphosphate. The catalysed reaction is 4-methyl-5-(2-phosphooxyethyl)-thiazole + 4-amino-2-methyl-5-(diphosphooxymethyl)pyrimidine + H(+) = thiamine phosphate + diphosphate. It functions in the pathway cofactor biosynthesis; thiamine diphosphate biosynthesis; thiamine phosphate from 4-amino-2-methyl-5-diphosphomethylpyrimidine and 4-methyl-5-(2-phosphoethyl)-thiazole: step 1/1. Its function is as follows. Condenses 4-methyl-5-(beta-hydroxyethyl)thiazole monophosphate (THZ-P) and 2-methyl-4-amino-5-hydroxymethyl pyrimidine pyrophosphate (HMP-PP) to form thiamine monophosphate (TMP). The sequence is that of Thiamine-phosphate synthase from Methanococcus maripaludis (strain DSM 14266 / JCM 13030 / NBRC 101832 / S2 / LL).